We begin with the raw amino-acid sequence, 239 residues long: Prolactin-8A4 (239 aa).

A signal peptide spans 1 to 31; it reads MMKLALSQPPFSGTLLMLVVSILLLWEKAAS. 2 cysteine pairs are disulfide-bonded: cysteine 35–cysteine 42 and cysteine 102–cysteine 215. N-linked (GlcNAc...) asparagine glycosylation is found at asparagine 211 and asparagine 218. A disulfide bridge connects residues cysteine 232 and cysteine 239.

The protein belongs to the somatotropin/prolactin family. Placental basal zone cells.

It localises to the secreted. This is Prolactin-8A4 (Prl8a4) from Rattus norvegicus (Rat).